The chain runs to 226 residues: Lysoplasmalogenase TMEM86B (226 aa).

Topologically, residues 1-23 (MDAGKAGQTLKTHCSAQRPDVCR) are cytoplasmic. A helical membrane pass occupies residues 24-40 (WLSPFILSCCVYFCLWI). The Extracellular segment spans residues 41–46 (PEDQLS). Residues 47–67 (WFAALVKCLPVLCLAGFLWVM) traverse the membrane as a helical segment. The Cytoplasmic segment spans residues 68-75 (SPSGGYTQ). A helical transmembrane segment spans residues 76–93 (LLQGALVCSAVGDACLIW). Residues 94-100 (PAAFVPG) are Extracellular-facing. The helical transmembrane segment at 101–117 (MAAFATAHLLYVWAFGF) threads the bilayer. Over 118–123 (SPLQPG) the chain is Cytoplasmic. A helical transmembrane segment spans residues 124-140 (LLLLIILAPGPYLSLVL). Residues 141–146 (QHLEPD) lie on the Extracellular side of the membrane. A helical transmembrane segment spans residues 147–163 (MVLPVAAYGLILMAMLW). Over 164–171 (RGLAQGGS) the chain is Cytoplasmic. Residues 172–188 (AGWGALLFTLSDGVLAW) form a helical membrane-spanning segment. The Extracellular segment spans residues 189 to 199 (DTFAQPLPHAH). Residues 200–218 (LVIMTTYYAAQLLITLSAL) traverse the membrane as a helical segment. Topologically, residues 219–226 (RSPVPKTD) are cytoplasmic.

Belongs to the TMEM86 family. As to quaternary structure, homodimer.

It is found in the endoplasmic reticulum membrane. The protein resides in the cytoplasm. It catalyses the reaction a 1-O-(1Z-alkenyl)-sn-glycero-3-phosphocholine + H2O = a 2,3-saturated aldehyde + sn-glycerol 3-phosphocholine. The enzyme catalyses a 1-O-(1Z-alkenyl)-sn-glycero-3-phosphoethanolamine + H2O = a 2,3-saturated aldehyde + sn-glycero-3-phosphoethanolamine. Competitively inhibited by lysophosphatidic acid. Its function is as follows. Catalyzes the hydrolysis of the vinyl ether bond of choline or ethanolamine lysoplasmalogens, forming fatty aldehyde and glycerophosphocholine or glycerophosphoethanolamine, respectively and is specific for the sn-2-deacylated (lyso) form of plasmalogen. This is Lysoplasmalogenase TMEM86B (TMEM86B) from Homo sapiens (Human).